The chain runs to 541 residues: T-complex protein 1 subunit epsilon (541 aa).

N-acetylalanine is present on Ala-2. Residue Lys-20 forms a Glycyl lysine isopeptide (Lys-Gly) (interchain with G-Cter in SUMO2) linkage. Position 26 is a phosphoserine (Ser-26). Position 53 (Gly-53) interacts with ADP. Gly-53 is a binding site for ATP. A Mg(2+)-binding site is contributed by Asp-104. Gly-105, Thr-106, Thr-107, and Ser-175 together coordinate ADP. 2 residues coordinate ATP: Thr-106 and Thr-107. Glycyl lysine isopeptide (Lys-Gly) (interchain with G-Cter in SUMO2) cross-links involve residues Lys-210, Lys-214, Lys-265, Lys-275, and Lys-279. The residue at position 346 (Ser-346) is a Phosphoserine. Lys-392 is covalently cross-linked (Glycyl lysine isopeptide (Lys-Gly) (interchain with G-Cter in SUMO2)). ADP is bound by residues Gly-422, Asp-492, Glu-508, and Lys-513. An ATP-binding site is contributed by Gly-422. A Phosphoserine modification is found at Ser-539.

This sequence belongs to the TCP-1 chaperonin family. In terms of assembly, component of the chaperonin-containing T-complex (TRiC), a hexadecamer composed of two identical back-to-back stacked rings enclosing a protein folding chamber. Each ring is made up of eight different subunits: TCP1/CCT1, CCT2, CCT3, CCT4, CCT5, CCT6A/CCT6, CCT7, CCT8. Interacts with PACRG. Interacts with DNAAF4. Interacts with DLEC1. Interacts with SPMAP2. Post-translationally, ubiquitinated by the DCX(DCAF12) complex specifically recognizes the diglutamate (Glu-Glu) at the C-terminus, leading to its degradation.

The protein localises to the cytoplasm. Its subcellular location is the cytoskeleton. It is found in the microtubule organizing center. It localises to the centrosome. The catalysed reaction is ATP + H2O = ADP + phosphate + H(+). Functionally, component of the chaperonin-containing T-complex (TRiC), a molecular chaperone complex that assists the folding of actin, tubulin and other proteins upon ATP hydrolysis. The TRiC complex mediates the folding of WRAP53/TCAB1, thereby regulating telomere maintenance. As part of the TRiC complex may play a role in the assembly of BBSome, a complex involved in ciliogenesis regulating transports vesicles to the cilia. This Pongo abelii (Sumatran orangutan) protein is T-complex protein 1 subunit epsilon (CCT5).